The primary structure comprises 463 residues: Asparagine--tRNA ligase (463 aa).

The protein belongs to the class-II aminoacyl-tRNA synthetase family. Homodimer.

The protein localises to the cytoplasm. It carries out the reaction tRNA(Asn) + L-asparagine + ATP = L-asparaginyl-tRNA(Asn) + AMP + diphosphate + H(+). The chain is Asparagine--tRNA ligase from Clostridium tetani (strain Massachusetts / E88).